We begin with the raw amino-acid sequence, 184 residues long: Homeobox protein LOX10 (184 aa).

Disordered regions lie at residues 1–29 (KIVS…PLQH) and 129–184 (YKTK…NKPG). Positions 76–135 (RRKRRILFSQAQIYELERRFRQQKYLSAPEREHLATFIGLTPTQVKIWFQNHRYKTKKSK) form a DNA-binding region, homeobox. Composition is skewed to low complexity over residues 140 to 161 (NSPS…ASTT) and 174 to 184 (SNTTNNNNKPG).

Belongs to the NK-2 homeobox family. Expressed in a segmental pattern in the endoderm and in the cephalic nervous system.

Its subcellular location is the nucleus. Functionally, may play a role in patterning the gut. The polypeptide is Homeobox protein LOX10 (LOX10) (Helobdella triserialis (Leech)).